The chain runs to 215 residues: Large ribosomal subunit protein uL4c (215 aa).

Positions Gln51–Ser87 are disordered. Residues Gly67–Gly78 show a composition bias toward basic residues.

It belongs to the universal ribosomal protein uL4 family. As to quaternary structure, part of the 50S ribosomal subunit.

It localises to the plastid. The protein resides in the chloroplast. Functionally, probably binds the 23S rRNA. The protein is Large ribosomal subunit protein uL4c (rpl4) of Thalassiosira pseudonana (Marine diatom).